A 346-amino-acid polypeptide reads, in one-letter code: Holliday junction branch migration complex subunit RuvB (346 aa).

Positions Met1–Tyr181 are large ATPase domain (RuvB-L). Residues Leu20, Arg21, Gly62, Lys65, Thr66, Thr67, Glu128–Phe130, Arg171, Tyr181, and Arg218 contribute to the ATP site. Thr66 contributes to the Mg(2+) binding site. Residues Thr182–Glu252 are small ATPAse domain (RuvB-S). The segment at Asn255–Glu346 is head domain (RuvB-H). DNA is bound by residues Arg291, Arg310, and Arg315.

This sequence belongs to the RuvB family. Homohexamer. Forms an RuvA(8)-RuvB(12)-Holliday junction (HJ) complex. HJ DNA is sandwiched between 2 RuvA tetramers; dsDNA enters through RuvA and exits via RuvB. An RuvB hexamer assembles on each DNA strand where it exits the tetramer. Each RuvB hexamer is contacted by two RuvA subunits (via domain III) on 2 adjacent RuvB subunits; this complex drives branch migration. In the full resolvosome a probable DNA-RuvA(4)-RuvB(12)-RuvC(2) complex forms which resolves the HJ.

The protein localises to the cytoplasm. The catalysed reaction is ATP + H2O = ADP + phosphate + H(+). Its function is as follows. The RuvA-RuvB-RuvC complex processes Holliday junction (HJ) DNA during genetic recombination and DNA repair, while the RuvA-RuvB complex plays an important role in the rescue of blocked DNA replication forks via replication fork reversal (RFR). RuvA specifically binds to HJ cruciform DNA, conferring on it an open structure. The RuvB hexamer acts as an ATP-dependent pump, pulling dsDNA into and through the RuvAB complex. RuvB forms 2 homohexamers on either side of HJ DNA bound by 1 or 2 RuvA tetramers; 4 subunits per hexamer contact DNA at a time. Coordinated motions by a converter formed by DNA-disengaged RuvB subunits stimulates ATP hydrolysis and nucleotide exchange. Immobilization of the converter enables RuvB to convert the ATP-contained energy into a lever motion, pulling 2 nucleotides of DNA out of the RuvA tetramer per ATP hydrolyzed, thus driving DNA branch migration. The RuvB motors rotate together with the DNA substrate, which together with the progressing nucleotide cycle form the mechanistic basis for DNA recombination by continuous HJ branch migration. Branch migration allows RuvC to scan DNA until it finds its consensus sequence, where it cleaves and resolves cruciform DNA. The protein is Holliday junction branch migration complex subunit RuvB of Brucella anthropi (strain ATCC 49188 / DSM 6882 / CCUG 24695 / JCM 21032 / LMG 3331 / NBRC 15819 / NCTC 12168 / Alc 37) (Ochrobactrum anthropi).